Reading from the N-terminus, the 205-residue chain is ATP synthase subunit b (205 aa).

Residues 51–69 (FAWRCLDFAVLLAIVVWAL) traverse the membrane as a helical segment.

Belongs to the ATPase B chain family. F-type ATPases have 2 components, F(1) - the catalytic core - and F(0) - the membrane proton channel. F(1) has five subunits: alpha(3), beta(3), gamma(1), delta(1), epsilon(1). F(0) has three main subunits: a(1), b(2) and c(10-14). The alpha and beta chains form an alternating ring which encloses part of the gamma chain. F(1) is attached to F(0) by a central stalk formed by the gamma and epsilon chains, while a peripheral stalk is formed by the delta and b chains.

It localises to the cell inner membrane. Functionally, f(1)F(0) ATP synthase produces ATP from ADP in the presence of a proton or sodium gradient. F-type ATPases consist of two structural domains, F(1) containing the extramembraneous catalytic core and F(0) containing the membrane proton channel, linked together by a central stalk and a peripheral stalk. During catalysis, ATP synthesis in the catalytic domain of F(1) is coupled via a rotary mechanism of the central stalk subunits to proton translocation. In terms of biological role, component of the F(0) channel, it forms part of the peripheral stalk, linking F(1) to F(0). In Geotalea uraniireducens (strain Rf4) (Geobacter uraniireducens), this protein is ATP synthase subunit b.